Consider the following 355-residue polypeptide: Probable dual-specificity RNA methyltransferase RlmN (355 aa).

Residue Glu-107 is the Proton acceptor of the active site. The 229-residue stretch at 113 to 341 folds into the Radical SAM core domain; the sequence is TDKRLTVCVS…VSVRYSRGLE (229 aa). A disulfide bridge connects residues Cys-120 and Cys-346. [4Fe-4S] cluster contacts are provided by Cys-127, Cys-131, and Cys-134. S-adenosyl-L-methionine is bound by residues 174 to 175, Ser-204, 227 to 229, and Asn-303; these read GE and SLH. Catalysis depends on Cys-346, which acts as the S-methylcysteine intermediate.

This sequence belongs to the radical SAM superfamily. RlmN family. The cofactor is [4Fe-4S] cluster.

It localises to the cytoplasm. It carries out the reaction adenosine(2503) in 23S rRNA + 2 reduced [2Fe-2S]-[ferredoxin] + 2 S-adenosyl-L-methionine = 2-methyladenosine(2503) in 23S rRNA + 5'-deoxyadenosine + L-methionine + 2 oxidized [2Fe-2S]-[ferredoxin] + S-adenosyl-L-homocysteine. It catalyses the reaction adenosine(37) in tRNA + 2 reduced [2Fe-2S]-[ferredoxin] + 2 S-adenosyl-L-methionine = 2-methyladenosine(37) in tRNA + 5'-deoxyadenosine + L-methionine + 2 oxidized [2Fe-2S]-[ferredoxin] + S-adenosyl-L-homocysteine. Functionally, specifically methylates position 2 of adenine 2503 in 23S rRNA and position 2 of adenine 37 in tRNAs. This chain is Probable dual-specificity RNA methyltransferase RlmN, found in Trichormus variabilis (strain ATCC 29413 / PCC 7937) (Anabaena variabilis).